The primary structure comprises 303 residues: Ribosomal RNA small subunit methyltransferase H (303 aa).

Residues 33 to 35 (GGH), Asp-52, Phe-79, Asp-97, and Gln-104 each bind S-adenosyl-L-methionine.

This sequence belongs to the methyltransferase superfamily. RsmH family.

It localises to the cytoplasm. The catalysed reaction is cytidine(1402) in 16S rRNA + S-adenosyl-L-methionine = N(4)-methylcytidine(1402) in 16S rRNA + S-adenosyl-L-homocysteine + H(+). In terms of biological role, specifically methylates the N4 position of cytidine in position 1402 (C1402) of 16S rRNA. This chain is Ribosomal RNA small subunit methyltransferase H, found in Wolinella succinogenes (strain ATCC 29543 / DSM 1740 / CCUG 13145 / JCM 31913 / LMG 7466 / NCTC 11488 / FDC 602W) (Vibrio succinogenes).